The sequence spans 588 residues: MNNSINHKFHHISRAEYQELLAVSRGDAVADYIIDNVSILDLINAGEISGPIVIKGRYIAGVGAEYADTPALQRIDARGATAVPGFIDAHLHIESSMMTPVTFETATLPRGLTTVICDPHEIVNVMGEAGFAWFARCAEQARQNQYLQVSSCVPALEGCDVNGASFTLEQMLAWRDHPQVTGLAEMMDYPGVINGQNALLDKLDAFRYLTLDGHCPGLGGKELNAYIAAGIENCHESYQLEEGRRKLQLGMSLMIREGSAASNLNALAPLINEFNSPQCMLCTDDRNPWEIAHEGHIDALIRRLIEQHNVPLHVAYRVASWSTARHFGLNHLGLLAPGKQADIVLLSDARKVTVQQVLVKGEPIDAQTLQAEESARLALSAPPYGNTIARQPVSASDFALQFTPGKRYRVIDVIHNELITHSRSSVYSENGFDRDDVCFIAVLERYRQRLAPACGLLGGFGLNEGALAATVSHDSHNIVVIGRSAEEMALAVNQVIQDGGGLCVVRNGQVQSHLPLPIAGLMSTDTAQSLAEQIDALKAAARECGPLPDEPFIQMAFLSLPVIPALKLTSQGLFDGEKFAFTTLEVTE.

Belongs to the metallo-dependent hydrolases superfamily. Adenine deaminase family. Homodimer. Requires Mn(2+) as cofactor.

It catalyses the reaction adenine + H2O + H(+) = hypoxanthine + NH4(+). This is Adenine deaminase from Shigella flexneri serotype 5b (strain 8401).